The chain runs to 362 residues: Adenosine deaminase (362 aa).

Residues His-19 and His-21 each contribute to the Zn(2+) site. His-21, Asp-23, and Gly-181 together coordinate substrate. His-208 serves as a coordination point for Zn(2+). Glu-211 functions as the Proton donor in the catalytic mechanism. Residue Asp-300 participates in Zn(2+) binding.

The protein belongs to the metallo-dependent hydrolases superfamily. Adenosine and AMP deaminases family. Adenosine deaminase subfamily. The cofactor is Zn(2+).

The catalysed reaction is adenosine + H2O + H(+) = inosine + NH4(+). It catalyses the reaction 2'-deoxyadenosine + H2O + H(+) = 2'-deoxyinosine + NH4(+). Catalyzes the hydrolytic deamination of adenosine and 2-deoxyadenosine. This is Adenosine deaminase from Mycobacterium leprae (strain TN).